A 939-amino-acid chain; its full sequence is U3 small nucleolar RNA-associated protein 21 (939 aa).

At Ser-2 the chain carries N-acetylserine. WD repeat units follow at residues 40-71 (ATGT…LLFV), 81-111 (VALS…HLLE), 119-158 (EHLC…TKLT), 168-201 (VSLQ…LVFT), 208-245 (QITT…RTIK), 252-287 (SSLS…IHVL), 295-347 (YGGV…RSRG), 354-388 (SYIA…QSQE), 415-454 (VALA…GRWT), 463-497 (VKSV…LRKK), 505-541 (VTGI…GKLK), 546-581 (ITAM…VRQL), 583-624 (GHSN…DGII), and 626-664 (DNVA…KTVS). Ser-772 carries the phosphoserine modification.

As to quaternary structure, interacts with snoRNA U3. Interacts with MPP10. Interacts (via WD repeats) with UTP18. Component of the ribosomal small subunit (SSU) processome composed of at least 40 protein subunits and snoRNA U3.

The protein resides in the nucleus. Its subcellular location is the nucleolus. In terms of biological role, involved in nucleolar processing of pre-18S ribosomal RNA and ribosome assembly. This is U3 small nucleolar RNA-associated protein 21 (UTP21) from Saccharomyces cerevisiae (strain ATCC 204508 / S288c) (Baker's yeast).